Here is a 298-residue protein sequence, read N- to C-terminus: Cytochrome c oxidase subunit 2 (298 aa).

Residues 1 to 29 form the signal peptide; that stretch reads MMAIATKRRGVAAVMSLGVATMTAVPALA. Pyrrolidone carboxylic acid is present on glutamine 30. Topologically, residues 30 to 55 are periplasmic; sequence QDVLGDLPVIGKPVNGGMNFQPASSP. A helical membrane pass occupies residues 56-88; the sequence is LAHDQQWLDHFVLYIITAVTIFVCLLLLICIVR. Residues 89 to 103 are Cytoplasmic-facing; the sequence is FNRRANPVPARFTHN. Residues 104–134 form a helical membrane-spanning segment; that stretch reads TPIEVIWTLVPVLILVAIGAFSLPILFRSQE. Residues 135–280 are Periplasmic-facing; the sequence is MPNDPDLVIK…WLAGAKEEFA (146 aa). Residues histidine 210, cysteine 245, glutamate 247, cysteine 249, histidine 253, and methionine 256 each contribute to the Cu cation site. The propeptide at 281-298 is C-terminal propeptide; that stretch reads ADASDYLPASPVKLASAE.

This sequence belongs to the cytochrome c oxidase subunit 2 family. Binuclear copper center (CuA) is required as a cofactor.

Its subcellular location is the cell inner membrane. The enzyme catalyses 4 Fe(II)-[cytochrome c] + O2 + 8 H(+)(in) = 4 Fe(III)-[cytochrome c] + 2 H2O + 4 H(+)(out). Functionally, subunits I and II form the functional core of the enzyme complex. Electrons originating in cytochrome c are transferred via heme a and Cu(A) to the binuclear center formed by heme a3 and Cu(B). The protein is Cytochrome c oxidase subunit 2 (ctaC) of Paracoccus denitrificans.